Here is a 139-residue protein sequence, read N- to C-terminus: Trafficking protein particle complex subunit 2-like protein (139 aa).

The protein belongs to the TRAPP small subunits family. Sedlin subfamily.

The protein resides in the cytoplasm. It localises to the perinuclear region. Its subcellular location is the endoplasmic reticulum. It is found in the golgi apparatus. Functionally, may play a role in vesicular transport from endoplasmic reticulum to Golgi. The sequence is that of Trafficking protein particle complex subunit 2-like protein (trappc2l) from Xenopus tropicalis (Western clawed frog).